The sequence spans 328 residues: Sulfate adenylyltransferase subunit 2 (328 aa).

Residues 309-328 (RAIDKDQTASMEKKKQEGYF) are disordered.

The protein belongs to the PAPS reductase family. CysD subfamily. Heterodimer composed of CysD, the smaller subunit, and CysN.

It catalyses the reaction sulfate + ATP + H(+) = adenosine 5'-phosphosulfate + diphosphate. It participates in sulfur metabolism; hydrogen sulfide biosynthesis; sulfite from sulfate: step 1/3. In terms of biological role, with CysN forms the ATP sulfurylase (ATPS) that catalyzes the adenylation of sulfate producing adenosine 5'-phosphosulfate (APS) and diphosphate, the first enzymatic step in sulfur assimilation pathway. APS synthesis involves the formation of a high-energy phosphoric-sulfuric acid anhydride bond driven by GTP hydrolysis by CysN coupled to ATP hydrolysis by CysD. The chain is Sulfate adenylyltransferase subunit 2 from Hyphomonas neptunium (strain ATCC 15444).